Reading from the N-terminus, the 436-residue chain is Prenyltransferase nscD (436 aa).

Belongs to the tryptophan dimethylallyltransferase family.

It functions in the pathway secondary metabolite biosynthesis. Functionally, prenyltransferase; part of the gene cluster that mediates the biosynthesis of neosartoricin B, a prenylated anthracenone that probably exhibits T-cell antiproliferative activity, suggestive of a physiological role as an immunosuppressive agent. The non-reducing polyketide synthase nscA probably synthesizes and cyclizes the decaketide backbone. The hydrolase nscB then mediates the product release through hydrolysis followed by spontaneous decarboxylation. The prenyltransferase nscD catalyzes the addition of the dimethylallyl group to the aromatic C5. The FAD-dependent monooxygenase nscC is then responsible for the stereospecific hydroxylation at C2. Neosartoricin B can be converted into two additional compounds neosartoricins C and D. Neosartoricin C is a spirocyclic compound that is cyclized through the attack of C3 hydroxyl on C14, followed by dehydration. On the other hand, neosartoricin D is a further cyclized compound in which attack of C2 on C14 in neosartoricin C results in the formation of the acetal-containing dioxabicyclo-octanone ring. Both of these compounds are novel and possibly represent related metabolites of the gene cluster. This is Prenyltransferase nscD from Arthroderma otae (strain ATCC MYA-4605 / CBS 113480) (Microsporum canis).